The chain runs to 750 residues: Photosystem I P700 chlorophyll a apoprotein A1 (750 aa).

8 helical membrane passes run 70–93 (VFSA…FHGA), 156–179 (LYST…FHYH), 195–219 (LNHH…HVSL), 291–309 (TAHH…GHMY), 346–369 (WHAQ…HHMY), 385–411 (LSLF…IFMV), 433–455 (AIIS…LYIH), and 531–549 (FLVH…LILL). The [4Fe-4S] cluster site is built by Cys-573 and Cys-582. The next 2 helical transmembrane spans lie at 589-610 (HVFL…HFSW) and 664-686 (LSAY…MFLF). His-675 contributes to the chlorophyll a' binding site. 2 residues coordinate chlorophyll a: Met-683 and Tyr-691. Trp-692 is a binding site for phylloquinone. Residues 724–744 (AVGVAHYLLGGIATTWAFFLA) form a helical membrane-spanning segment.

It belongs to the PsaA/PsaB family. As to quaternary structure, the PsaA/B heterodimer binds the P700 chlorophyll special pair and subsequent electron acceptors. PSI consists of a core antenna complex that captures photons, and an electron transfer chain that converts photonic excitation into a charge separation. The eukaryotic PSI reaction center is composed of at least 11 subunits. P700 is a chlorophyll a/chlorophyll a' dimer, A0 is one or more chlorophyll a, A1 is one or both phylloquinones and FX is a shared 4Fe-4S iron-sulfur center. serves as cofactor.

It localises to the plastid. The protein resides in the chloroplast thylakoid membrane. It carries out the reaction reduced [plastocyanin] + hnu + oxidized [2Fe-2S]-[ferredoxin] = oxidized [plastocyanin] + reduced [2Fe-2S]-[ferredoxin]. Its function is as follows. PsaA and PsaB bind P700, the primary electron donor of photosystem I (PSI), as well as the electron acceptors A0, A1 and FX. PSI is a plastocyanin-ferredoxin oxidoreductase, converting photonic excitation into a charge separation, which transfers an electron from the donor P700 chlorophyll pair to the spectroscopically characterized acceptors A0, A1, FX, FA and FB in turn. Oxidized P700 is reduced on the lumenal side of the thylakoid membrane by plastocyanin. This is Photosystem I P700 chlorophyll a apoprotein A1 from Marchantia polymorpha (Common liverwort).